We begin with the raw amino-acid sequence, 620 residues long: Kelch-like protein 8 (620 aa).

Positions 1-10 (MASDSMSSKQ) are enriched in polar residues. A disordered region spans residues 1-35 (MASDSMSSKQARNHITKGKRQQQHQQIKNRSSISD). Ala-2 carries the post-translational modification N-acetylalanine. The span at 11–22 (ARNHITKGKRQQ) shows a compositional bias: basic residues. Residues 23-34 (QHQQIKNRSSIS) show a composition bias toward polar residues. In terms of domain architecture, BTB spans 67–134 (CDVTLKVGSK…VYSSRLTLTV (68 aa)). The BACK domain occupies 169–270 (CLAVRAFAES…LPVDFLMGVV (102 aa)). 6 Kelch repeats span residues 319 to 366 (VLFC…SVEG), 367 to 413 (KVYA…SLGG), 415 to 460 (IYAI…ALVN), 462 to 507 (VYAV…KLHG), 508 to 554 (CLYV…TVMG), and 556 to 601 (IFAV…VCSC).

Component of the BCR(KLHL8) E3 ubiquitin ligase complex, at least composed of CUL3, KLHL8 and RBX1. Interacts with RAPSN.

It participates in protein modification; protein ubiquitination. Substrate-specific adapter of a BCR (BTB-CUL3-RBX1) E3 ubiquitin ligase complex required for The BCR(KLHL8) ubiquitin ligase complex mediates ubiquitination and degradation of RAPSN. The chain is Kelch-like protein 8 (KLHL8) from Homo sapiens (Human).